Reading from the N-terminus, the 505-residue chain is Pleckstrin homology domain-containing family D member 1 (505 aa).

The PH domain maps to 28–136; that stretch reads KVQLYGVLWK…WLEMLQESGK (109 aa). Positions 146-391 form a coiled coil; it reads EAMIKSLEAQ…KVRNKEKEER (246 aa). A disordered region spans residues 264–284; sequence DKNQPQPLTNQSEQPPASDGL. A compositionally biased stretch (polar residues) spans 267 to 278; the sequence is QPQPLTNQSEQP. Arg502 is modified (omega-N-methylarginine).

The protein belongs to the PLEKHD1 family.

This is Pleckstrin homology domain-containing family D member 1 (Plekhd1) from Mus musculus (Mouse).